Reading from the N-terminus, the 319-residue chain is MHVTPLRLIFMGTPDFAVPSLQAIVDASLPVEVVQVVTAPDRPRRKKNAEAEPTPVKSLALQLGLPVLEVEDVKDPGFAEAVRRLQPDVIVVAAFRILPPAVYGAARLGAFNLHASLLPAYRGAAPINHALIEGERESGVTTFFLQRQVDTGNIILKKSTPINSMENATQLAERLSQIGAEAVVETLRLIAEGTVEVSAQDESLVSKAPKLTRENTRIDWNQSAEDLHNFIRGLAMRPTAWTTLGGKNFKIFQSAPAPAVPATSCGKPGTMLIEGGCLYASGTDGWIEILSLQLEGKRPMDAGEFLRGFRAESGVLFGS.

Position 116-119 (116-119) interacts with (6S)-5,6,7,8-tetrahydrofolate; sequence SLLP.

The protein belongs to the Fmt family.

It catalyses the reaction L-methionyl-tRNA(fMet) + (6R)-10-formyltetrahydrofolate = N-formyl-L-methionyl-tRNA(fMet) + (6S)-5,6,7,8-tetrahydrofolate + H(+). Functionally, attaches a formyl group to the free amino group of methionyl-tRNA(fMet). The formyl group appears to play a dual role in the initiator identity of N-formylmethionyl-tRNA by promoting its recognition by IF2 and preventing the misappropriation of this tRNA by the elongation apparatus. This is Methionyl-tRNA formyltransferase from Chlorobium phaeovibrioides (strain DSM 265 / 1930) (Prosthecochloris vibrioformis (strain DSM 265)).